Reading from the N-terminus, the 382-residue chain is Carbamoyl phosphate synthase small chain (382 aa).

Residues 1-189 form a CPSase region; that stretch reads MIKSALLVLE…GLPEAKSEDD (189 aa). L-glutamine contacts are provided by Ser47, Gly241, and Gly243. The Glutamine amidotransferase type-1 domain occupies 193–380; sequence HVVAYDFGAK…IELIEQYRQS (188 aa). Cys269 (nucleophile) is an active-site residue. Residues Leu270, Gln273, Asn311, Gly313, and Phe314 each coordinate L-glutamine. Residues His353 and Glu355 contribute to the active site.

Belongs to the CarA family. In terms of assembly, composed of two chains; the small (or glutamine) chain promotes the hydrolysis of glutamine to ammonia, which is used by the large (or ammonia) chain to synthesize carbamoyl phosphate. Tetramer of heterodimers (alpha,beta)4.

The catalysed reaction is hydrogencarbonate + L-glutamine + 2 ATP + H2O = carbamoyl phosphate + L-glutamate + 2 ADP + phosphate + 2 H(+). The enzyme catalyses L-glutamine + H2O = L-glutamate + NH4(+). The protein operates within amino-acid biosynthesis; L-arginine biosynthesis; carbamoyl phosphate from bicarbonate: step 1/1. It functions in the pathway pyrimidine metabolism; UMP biosynthesis via de novo pathway; (S)-dihydroorotate from bicarbonate: step 1/3. Functionally, small subunit of the glutamine-dependent carbamoyl phosphate synthetase (CPSase). CPSase catalyzes the formation of carbamoyl phosphate from the ammonia moiety of glutamine, carbonate, and phosphate donated by ATP, constituting the first step of 2 biosynthetic pathways, one leading to arginine and/or urea and the other to pyrimidine nucleotides. The small subunit (glutamine amidotransferase) binds and cleaves glutamine to supply the large subunit with the substrate ammonia. This chain is Carbamoyl phosphate synthase small chain, found in Salmonella typhimurium (strain LT2 / SGSC1412 / ATCC 700720).